The chain runs to 430 residues: Zinc finger CCCH domain-containing protein 48 (430 aa).

2 disordered regions span residues M1 to S27 and G56 to N90. A C3H1-type 1 zinc finger spans residues D26–L52. The segment at T102–S129 adopts a C3H1-type 2 zinc-finger fold. WD repeat units lie at residues G142–N183, G221–D258, G265–T304, H306–V342, T345–K389, and L391–L429.

In Arabidopsis thaliana (Mouse-ear cress), this protein is Zinc finger CCCH domain-containing protein 48 (ZFWD1).